A 209-amino-acid chain; its full sequence is Protein GrpE (209 aa).

Residues 1 to 63 form a disordered region; sequence MKKSRKKENM…NPEEACREEN (63 aa). Basic and acidic residues-rich tracts occupy residues 7 to 42 and 50 to 63; these read KENM…KVSP and EAEK…REEN.

It belongs to the GrpE family. As to quaternary structure, homodimer.

The protein localises to the cytoplasm. Functionally, participates actively in the response to hyperosmotic and heat shock by preventing the aggregation of stress-denatured proteins, in association with DnaK and GrpE. It is the nucleotide exchange factor for DnaK and may function as a thermosensor. Unfolded proteins bind initially to DnaJ; upon interaction with the DnaJ-bound protein, DnaK hydrolyzes its bound ATP, resulting in the formation of a stable complex. GrpE releases ADP from DnaK; ATP binding to DnaK triggers the release of the substrate protein, thus completing the reaction cycle. Several rounds of ATP-dependent interactions between DnaJ, DnaK and GrpE are required for fully efficient folding. This chain is Protein GrpE, found in Methanosarcina mazei (strain ATCC BAA-159 / DSM 3647 / Goe1 / Go1 / JCM 11833 / OCM 88) (Methanosarcina frisia).